The primary structure comprises 316 residues: Acetyl-coenzyme A carboxylase carboxyl transferase subunit alpha (316 aa).

Residues 36–290 form the CoA carboxyltransferase C-terminal domain; the sequence is KLEQKLDSLK…KQFLVEQLHI (255 aa).

This sequence belongs to the AccA family. As to quaternary structure, acetyl-CoA carboxylase is a heterohexamer composed of biotin carboxyl carrier protein (AccB), biotin carboxylase (AccC) and two subunits each of ACCase subunit alpha (AccA) and ACCase subunit beta (AccD).

It localises to the cytoplasm. The catalysed reaction is N(6)-carboxybiotinyl-L-lysyl-[protein] + acetyl-CoA = N(6)-biotinyl-L-lysyl-[protein] + malonyl-CoA. Its pathway is lipid metabolism; malonyl-CoA biosynthesis; malonyl-CoA from acetyl-CoA: step 1/1. Functionally, component of the acetyl coenzyme A carboxylase (ACC) complex. First, biotin carboxylase catalyzes the carboxylation of biotin on its carrier protein (BCCP) and then the CO(2) group is transferred by the carboxyltransferase to acetyl-CoA to form malonyl-CoA. This is Acetyl-coenzyme A carboxylase carboxyl transferase subunit alpha from Protochlamydia amoebophila (strain UWE25).